A 51-amino-acid chain; its full sequence is Large ribosomal subunit protein eL40 (51 aa).

4 residues coordinate Zn(2+): Cys17, Cys20, Cys31, and Cys34.

Belongs to the eukaryotic ribosomal protein eL40 family. Part of the 50S ribosomal subunit. It depends on Zn(2+) as a cofactor.

The polypeptide is Large ribosomal subunit protein eL40 (Thermococcus kodakarensis (strain ATCC BAA-918 / JCM 12380 / KOD1) (Pyrococcus kodakaraensis (strain KOD1))).